Reading from the N-terminus, the 259-residue chain is Taurine import ATP-binding protein TauB (259 aa).

The ABC transporter domain occupies 4–233 (LELERISAQY…RYAAGESARA (230 aa)). 38 to 45 (GPSGSGKT) contacts ATP.

It belongs to the ABC transporter superfamily. Taurine importer (TC 3.A.1.17.1) family. The complex is composed of two ATP-binding proteins (TauB), two transmembrane proteins (TauC) and a solute-binding protein (TauA).

It localises to the cell inner membrane. It catalyses the reaction taurine(out) + ATP + H2O = taurine(in) + ADP + phosphate + H(+). In terms of biological role, part of the ABC transporter complex TauABC involved in taurine import. Responsible for energy coupling to the transport system. The polypeptide is Taurine import ATP-binding protein TauB (Pseudomonas entomophila (strain L48)).